A 431-amino-acid chain; its full sequence is Enolase (431 aa).

Glutamine 167 lines the (2R)-2-phosphoglycerate pocket. The active-site Proton donor is the glutamate 209. The Mg(2+) site is built by aspartate 246, glutamate 289, and aspartate 316. (2R)-2-phosphoglycerate contacts are provided by lysine 341, arginine 370, serine 371, and lysine 392. Catalysis depends on lysine 341, which acts as the Proton acceptor.

Belongs to the enolase family. Component of the RNA degradosome, a multiprotein complex involved in RNA processing and mRNA degradation. It depends on Mg(2+) as a cofactor.

It is found in the cytoplasm. The protein resides in the secreted. Its subcellular location is the cell surface. It carries out the reaction (2R)-2-phosphoglycerate = phosphoenolpyruvate + H2O. Its pathway is carbohydrate degradation; glycolysis; pyruvate from D-glyceraldehyde 3-phosphate: step 4/5. Catalyzes the reversible conversion of 2-phosphoglycerate (2-PG) into phosphoenolpyruvate (PEP). It is essential for the degradation of carbohydrates via glycolysis. This chain is Enolase, found in Shewanella loihica (strain ATCC BAA-1088 / PV-4).